The sequence spans 613 residues: Dihydroxy-acid dehydratase (613 aa).

Asp81 contacts Mg(2+). Cys122 contacts [2Fe-2S] cluster. Asp123 and Lys124 together coordinate Mg(2+). Lys124 is modified (N6-carboxylysine). A [2Fe-2S] cluster-binding site is contributed by Cys195. Residue Glu491 participates in Mg(2+) binding. Ser517 serves as the catalytic Proton acceptor.

It belongs to the IlvD/Edd family. As to quaternary structure, homodimer. The cofactor is [2Fe-2S] cluster. It depends on Mg(2+) as a cofactor.

The catalysed reaction is (2R)-2,3-dihydroxy-3-methylbutanoate = 3-methyl-2-oxobutanoate + H2O. It catalyses the reaction (2R,3R)-2,3-dihydroxy-3-methylpentanoate = (S)-3-methyl-2-oxopentanoate + H2O. It participates in amino-acid biosynthesis; L-isoleucine biosynthesis; L-isoleucine from 2-oxobutanoate: step 3/4. Its pathway is amino-acid biosynthesis; L-valine biosynthesis; L-valine from pyruvate: step 3/4. In terms of biological role, functions in the biosynthesis of branched-chain amino acids. Catalyzes the dehydration of (2R,3R)-2,3-dihydroxy-3-methylpentanoate (2,3-dihydroxy-3-methylvalerate) into 2-oxo-3-methylpentanoate (2-oxo-3-methylvalerate) and of (2R)-2,3-dihydroxy-3-methylbutanoate (2,3-dihydroxyisovalerate) into 2-oxo-3-methylbutanoate (2-oxoisovalerate), the penultimate precursor to L-isoleucine and L-valine, respectively. The sequence is that of Dihydroxy-acid dehydratase from Buchnera aphidicola subsp. Melaphis rhois.